The primary structure comprises 242 residues: Probable proteasome subunit alpha type-7 (242 aa).

The protein belongs to the peptidase T1A family. As to quaternary structure, the 26S proteasome consists of a 20S proteasome core and two 19S regulatory subunits. The 20S proteasome core is composed of 28 subunits that are arranged in four stacked rings, resulting in a barrel-shaped structure. The two end rings are each formed by seven alpha subunits, and the two central rings are each formed by seven beta subunits. The catalytic chamber with the active sites is on the inside of the barrel.

Its subcellular location is the cytoplasm. The protein localises to the nucleus. Functionally, the proteasome degrades poly-ubiquitinated proteins in the cytoplasm and in the nucleus. It is essential for the regulated turnover of proteins and for the removal of misfolded proteins. The proteasome is a multicatalytic proteinase complex that is characterized by its ability to cleave peptides with Arg, Phe, Tyr, Leu, and Glu adjacent to the leaving group at neutral or slightly basic pH. It has an ATP-dependent proteolytic activity. In Encephalitozoon cuniculi (strain GB-M1) (Microsporidian parasite), this protein is Probable proteasome subunit alpha type-7 (PRE10).